We begin with the raw amino-acid sequence, 143 residues long: Hemoglobin subunit alpha (143 aa).

Ser2 is modified (N-acetylserine). Residues Ser2–Arg143 form the Globin domain. An O2-binding site is contributed by His60. Heme b is bound at residue His89.

The protein belongs to the globin family. Heterotetramer of two alpha chains and two beta chains. As to expression, red blood cells.

In terms of biological role, involved in oxygen transport from gills to the various peripheral tissues. The sequence is that of Hemoglobin subunit alpha (hbaa1) from Danio rerio (Zebrafish).